Consider the following 317-residue polypeptide: Beta-ketoacyl-[acyl-carrier-protein] synthase III (317 aa).

Active-site residues include C112 and H244. The segment at 245–249 is ACP-binding; it reads QANLR. The active site involves N274.

The protein belongs to the thiolase-like superfamily. FabH family. In terms of assembly, homodimer.

The protein localises to the cytoplasm. It carries out the reaction malonyl-[ACP] + acetyl-CoA + H(+) = 3-oxobutanoyl-[ACP] + CO2 + CoA. Its pathway is lipid metabolism; fatty acid biosynthesis. Its function is as follows. Catalyzes the condensation reaction of fatty acid synthesis by the addition to an acyl acceptor of two carbons from malonyl-ACP. Catalyzes the first condensation reaction which initiates fatty acid synthesis and may therefore play a role in governing the total rate of fatty acid production. Possesses both acetoacetyl-ACP synthase and acetyl transacylase activities. Its substrate specificity determines the biosynthesis of branched-chain and/or straight-chain of fatty acids. This chain is Beta-ketoacyl-[acyl-carrier-protein] synthase III, found in Salmonella paratyphi A (strain ATCC 9150 / SARB42).